A 252-amino-acid chain; its full sequence is Phosphomannomutase (252 aa).

The active-site Nucleophile is the Asp13. Positions 13 and 15 each coordinate Mg(2+). Asp15 serves as the catalytic Proton donor/acceptor. Arg22, Arg124, Arg135, Arg142, Ser180, and Asp182 together coordinate alpha-D-mannose 1-phosphate. Residues Asp208, Tyr220, and Thr225 each coordinate Mg(2+).

This sequence belongs to the eukaryotic PMM family. In terms of assembly, homodimer. Requires Mg(2+) as cofactor. Expressed in roots, stems, leaves, flowers and immature fruits.

The protein localises to the cytoplasm. The enzyme catalyses alpha-D-mannose 1-phosphate = D-mannose 6-phosphate. It functions in the pathway nucleotide-sugar biosynthesis; GDP-alpha-D-mannose biosynthesis; alpha-D-mannose 1-phosphate from D-fructose 6-phosphate: step 2/2. In terms of biological role, catalyzes the interconversion of mannose-6-phosphate to mannose-1-phosphate, the precursor for the synthesis of GDP-mannose. GDP-mannose is an essential sugar nucleotide for the synthesis of D-mannose-containing cell wall polysaccharides (galactomannans and glucomannans), glycolipids, glycoproteins and the antioxidant L-ascorbate. Can complement the yeast temperature-sensitive mutant sec53-6. In Nicotiana benthamiana, this protein is Phosphomannomutase.